The sequence spans 114 residues: Large ribosomal subunit protein uL18 (114 aa).

The protein belongs to the universal ribosomal protein uL18 family. As to quaternary structure, part of the 50S ribosomal subunit; part of the 5S rRNA/L5/L18/L25 subcomplex. Contacts the 5S and 23S rRNAs.

Functionally, this is one of the proteins that bind and probably mediate the attachment of the 5S RNA into the large ribosomal subunit, where it forms part of the central protuberance. The chain is Large ribosomal subunit protein uL18 from Azobacteroides pseudotrichonymphae genomovar. CFP2.